Here is a 253-residue protein sequence, read N- to C-terminus: uncharacterized protein (253 aa).

An ATP-binding site is contributed by 7-14 (GKGGVGKT).

It to M.jannaschii MJ0084 and MJ0823.

This is an uncharacterized protein from Methanocaldococcus jannaschii (strain ATCC 43067 / DSM 2661 / JAL-1 / JCM 10045 / NBRC 100440) (Methanococcus jannaschii).